Reading from the N-terminus, the 273-residue chain is MSDMHSLLIAAILGVVEGLTEFLPVSSTGHMIIVGHLLGFEGDTAKTFEVVIQLGSILAVVVMFWRQLFGLIGIHFGRPLQREGESKGRLTLIHILLGMIPAVVLGLVFHDTIKSLFNPINVMYALVVGGLLLIAAECLKPKEPRAPGLDDMTYRQAFMIGCFQCLALWPGFSRSGATISGGMLMGVSRYAASEFSFLLAVPMMMGATVLDLYKSWSFLTAADIPMFAVGFVTAFVVALIAIKTFLQLIKRISFIPFAIYRFVVAAAVYVVFF.

The next 7 membrane-spanning stretches (helical) occupy residues 54–74, 90–110, 116–136, 156–178, 190–210, 222–242, and 252–272; these read LGSI…LIGI, LTLI…LVFH, LFNP…LIAA, QAFM…SGAT, YAAS…ATVL, ADIP…LIAI, and ISFI…YVVF.

Belongs to the UppP family.

It is found in the cell inner membrane. It catalyses the reaction di-trans,octa-cis-undecaprenyl diphosphate + H2O = di-trans,octa-cis-undecaprenyl phosphate + phosphate + H(+). Its function is as follows. Catalyzes the dephosphorylation of undecaprenyl diphosphate (UPP). Confers resistance to bacitracin. This Salmonella paratyphi A (strain ATCC 9150 / SARB42) protein is Undecaprenyl-diphosphatase.